A 505-amino-acid polypeptide reads, in one-letter code: Calcium/calmodulin-dependent protein kinase kinase 1 (505 aa).

The segment at 26 to 61 (THLEEADGGPEPTRNGVDPPPRARAASVIPGSTSRL) is disordered. Phosphoserine is present on residues Ser-67 and Ser-74. Arg-78 carries the post-translational modification Asymmetric dimethylarginine. Phosphoserine is present on Ser-100. Thr-108 carries the post-translational modification Phosphothreonine. The region spanning 128–409 (YKLQSEIGKG…VPDIKLHPWV (282 aa)) is the Protein kinase domain. Residues 134 to 142 (IGKGAYGVV) and Lys-157 contribute to the ATP site. Residues 167–189 (QYGFPRRPPPRGSQAAQGGPAKQ) are RP domain. Catalysis depends on Asp-275, which acts as the Proton acceptor. The segment at 435–440 (KNSVRL) is autoinhibitory domain. A calmodulin-binding region spans residues 438 to 463 (VRLIPSWTTVILVKSMLRKRSFGNPF). Phosphoserine occurs at positions 458, 475, and 492. The interval 460 to 505 (GNPFEPQARREERSMSAPGNLLVKEGFGEGGKSPELPGVQEDEAAS) is disordered.

This sequence belongs to the protein kinase superfamily. Ser/Thr protein kinase family. Interacts with CAMK4 and calmodulin. In terms of processing, appears to be autophosphorylated in a Ca(2+)/calmodulin-dependent manner. Phosphorylated at multiple sites by PRCAKA/PKA. Phosphorylation of Ser-458 is blocked upon binding to Ca(2+)/calmodulin. In vitro, phosphorylated by CAMK1 and CAMK4.

Its subcellular location is the cytoplasm. The protein resides in the nucleus. It carries out the reaction L-seryl-[protein] + ATP = O-phospho-L-seryl-[protein] + ADP + H(+). The catalysed reaction is L-threonyl-[protein] + ATP = O-phospho-L-threonyl-[protein] + ADP + H(+). Activated by Ca(2+)/calmodulin. Binding of calmodulin may relieve intrasteric autoinhibition. Partially inhibited upon phosphorylation by PRCAKA/PKA. May be regulated through phosphorylation by CAMK1 and CAMK4. Calcium/calmodulin-dependent protein kinase that belongs to a proposed calcium-triggered signaling cascade involved in a number of cellular processes. Phosphorylates CAMK1, CAMK1D, CAMK1G and CAMK4. Involved in regulating cell apoptosis. Promotes cell survival by phosphorylating AKT1/PKB that inhibits pro-apoptotic BAD/Bcl2-antagonist of cell death. In Homo sapiens (Human), this protein is Calcium/calmodulin-dependent protein kinase kinase 1 (CAMKK1).